Reading from the N-terminus, the 887-residue chain is MSGVNEIRSTFLDYFKKNGHEIVPSSPLVPRNDPTLMFTNAGMVQFKNVFTGLESRPYSTAASAQKCVRAGGKHNDLDNVGYTARHHTFFEMLGNFSFGDYFKEEAITHAWNLITKEFGIDRNRLLVTVYHTDDEAFNLWKKIAGFSDDRIIRIPTSDNFWAMGDTGPCGPCSEIFYDHGDHIWGGPPGSPEEDGDRFIEIWNLVFMQYEQLTKEERIDLPRPSIDTGMGLERISALLQGKHDNYDTDLFRALIAASVEATGVPAEGEHRASHRVIADHLRSSAFLIADGVLPSSEGRGYVLRRIMRRAMRHAELLGSRDPLIYRLLPALIQQMGRAYPELVRAEALISETLKLEETRFRKTLERGLSLLSDATSTLHKGDMLDGETAFKLYDTYGFPLDLTQDALRAREIGVDISGFTDAMQRQKAEARSHWAGSGDKATETVWFELKEKFGATEFLGYDTESAEGVIQAIVRDGKEVDSAAEGETVHIVVNQTPFYGESGGQMGDTGVIVGDAGTFDVSGTQKKGEGLFVHSGTVSKGGLKVNEAVQLTVDHDRRSRLRANHSATHLLHEALREVLGTHVAQKGSLVAPERLRFDVSHPKPMSAEELKVVEDMANEIVLQNSPVVTRLMSVDDAIAEGAMALFGEKYGDEVRVVSMGTGLHGAKANRPYSVELCGGTHVAATGQIGLIRILGESAVGSGVRRLEAVTGQGALAYLAEQDERVKALASSLKVQPGDVLSRVEGLLDERKKLERELADARKKLAMGGGSSDAGANDVQQVAGVNFLAKSLSGIDAKDLKGLADEAKANLGSGVVLLIAVSDDGKASAVAAVTEDLTGRFSAVDIVRTASAALGGKGGGGRPDMAQAGGPDGTKAKEAIEAVAAALAA.

His-564, His-568, Cys-676, and His-680 together coordinate Zn(2+).

Belongs to the class-II aminoacyl-tRNA synthetase family. Requires Zn(2+) as cofactor.

The protein resides in the cytoplasm. It carries out the reaction tRNA(Ala) + L-alanine + ATP = L-alanyl-tRNA(Ala) + AMP + diphosphate. Functionally, catalyzes the attachment of alanine to tRNA(Ala) in a two-step reaction: alanine is first activated by ATP to form Ala-AMP and then transferred to the acceptor end of tRNA(Ala). Also edits incorrectly charged Ser-tRNA(Ala) and Gly-tRNA(Ala) via its editing domain. This chain is Alanine--tRNA ligase, found in Agrobacterium fabrum (strain C58 / ATCC 33970) (Agrobacterium tumefaciens (strain C58)).